Here is a 451-residue protein sequence, read N- to C-terminus: Speckle-type POZ protein homolog (451 aa).

Positions 51–75 are disordered; it reads EVVSSGSGNSAHGRSISPSPSSASH. A compositionally biased stretch (low complexity) spans 60 to 75; the sequence is SAHGRSISPSPSSASH. One can recognise an MATH domain in the interval 95-225; sequence KFNYMWTINN…GDRLSIFCEV (131 aa). The BTB domain occupies 265-338; it reads SDFTLVCKSD…MYTGQTKYIE (74 aa).

This sequence belongs to the Tdpoz family.

Its subcellular location is the nucleus. The protein localises to the nucleus speckle. It functions in the pathway protein modification; protein ubiquitination. In terms of biological role, mediates ubiquitination and proteasomal degradation of target proteins, most likely in complex with cul-3. May promote the degradation of bromodomain-containing proteins such as bet-1. This chain is Speckle-type POZ protein homolog, found in Caenorhabditis elegans.